Here is a 334-residue protein sequence, read N- to C-terminus: Tryptophan--tRNA ligase (334 aa).

Residues Gln11 to Ser13 and Gly19 to Asn20 contribute to the ATP site. The 'HIGH' region signature appears at Pro12 to Asn20. L-tryptophan is bound at residue Asp135. Residues Gly147–Asp149, Val186, and Lys195–Ser199 contribute to the ATP site. Positions Lys195–Ser199 match the 'KMSKS' region motif.

Belongs to the class-I aminoacyl-tRNA synthetase family. Homodimer.

The protein localises to the cytoplasm. It carries out the reaction tRNA(Trp) + L-tryptophan + ATP = L-tryptophyl-tRNA(Trp) + AMP + diphosphate + H(+). Catalyzes the attachment of tryptophan to tRNA(Trp). Amino acylates tRNA(Trp) with both L- and D-tryptophan, although D-tryptophan is a poor substrate. The chain is Tryptophan--tRNA ligase from Escherichia coli (strain K12).